Reading from the N-terminus, the 175-residue chain is MANEIIIVEGKSDSQKLKKIYGENLITFETNGLGIDDKKLNSIKELSKKNKIIIFTDPDGPGKKIRETIIEFLDVDVFNAFVSKQDIDKNSKKIGLAEASEEAIKKALDNLITYNKKNISISWDEYVKNDFYIKANRIIIANHFNLSEDMSSKSLFKWLNWMNLKVKDIEKIIGE.

Residues asparagine 3 to serine 83 enclose the Toprim domain. Mg(2+) is bound by residues glutamate 9, aspartate 57, and aspartate 59.

It belongs to the ribonuclease M5 family. Mg(2+) serves as cofactor.

It is found in the cytoplasm. It carries out the reaction Endonucleolytic cleavage of RNA, removing 21 and 42 nucleotides, respectively, from the 5'- and 3'-termini of a 5S-rRNA precursor.. In terms of biological role, required for correct processing of both the 5' and 3' ends of 5S rRNA precursor. Cleaves both sides of a double-stranded region yielding mature 5S rRNA in one step. The polypeptide is Ribonuclease M5 (Mesoplasma florum (strain ATCC 33453 / NBRC 100688 / NCTC 11704 / L1) (Acholeplasma florum)).